The following is a 424-amino-acid chain: Dapdiamide A synthase (424 aa).

Positions 120 to 318 (QEQLALKGVA…QISKLAQAVL (199 aa)) constitute an ATP-grasp domain. Residue 147–209 (AGHAHWPVVL…QEFLAGEEFV (63 aa)) coordinates ATP. Mg(2+) is bound by residues E275 and E287.

The cofactor is Mg(2+). Mn(2+) is required as a cofactor.

It catalyses the reaction 3-[[[(2R,3R)-3-carboxyoxiran-2-yl]carbonyl]amino]-L-alanine + L-valine + ATP = dapdiamide E + ADP + phosphate + H(+). The enzyme catalyses N(3)-fumaramoyl-(S)-2,3-diaminopropanoate + L-valine + ATP = dapdiamide A + ADP + phosphate + H(+). The catalysed reaction is N(3)-fumaramoyl-(S)-2,3-diaminopropanoate + L-isoleucine + ATP = dapdiamide B + ADP + phosphate + H(+). It carries out the reaction N(3)-fumaramoyl-(S)-2,3-diaminopropanoate + L-leucine + ATP = dapdiamide C + ADP + phosphate + H(+). Its pathway is antibiotic biosynthesis. In terms of biological role, involved in dapdiamide antibiotics biosynthesis. Ligates N-beta-fumaramoyl-DAP and valine, isoleucine or leucine to form dapdiamides A, B or C, respectively. Also ligates N-beta-epoxysuccinamoyl-DAP and valine to form dapdiamide E. The sequence is that of Dapdiamide A synthase from Enterobacter agglomerans (Erwinia herbicola).